Reading from the N-terminus, the 91-residue chain is Sec-independent protein translocase protein TatA (91 aa).

Residues 1-21 (MGAMQPMHWLIVAVVVVILFG) form a helical membrane-spanning segment.

The protein belongs to the TatA/E family. As to quaternary structure, the Tat system comprises two distinct complexes: a TatABC complex, containing multiple copies of TatA, TatB and TatC subunits, and a separate TatA complex, containing only TatA subunits. Substrates initially bind to the TatABC complex, which probably triggers association of the separate TatA complex to form the active translocon.

It localises to the cell membrane. Functionally, part of the twin-arginine translocation (Tat) system that transports large folded proteins containing a characteristic twin-arginine motif in their signal peptide across membranes. TatA could form the protein-conducting channel of the Tat system. This Rhodococcus erythropolis (strain PR4 / NBRC 100887) protein is Sec-independent protein translocase protein TatA.